Consider the following 935-residue polypeptide: Myocardin (935 aa).

Positions 12-27 match the MEF2C-binding motif; the sequence is IRRKFRSVLQLRLQQR. RPEL repeat units follow at residues 18–43, 62–87, and 106–131; these read SVLQ…PPLK, DSLR…QAST, and DDLN…PMDS. The interval 37 to 73 is disordered; the sequence is GLIPPLKGPTEFHDPRKQLDSAKTEDSLRRKGRNRSD. Over residues 46-73 the composition is skewed to basic and acidic residues; the sequence is TEFHDPRKQLDSAKTEDSLRRKGRNRSD. The HDAC5-binding stretch occupies residues 153 to 201; sequence FEDDSSRDGLSPDQARSEDPQGSTGSTPDIKSTEAPLDTIQDLTPGSES. The tract at residues 155-283 is disordered; the sequence is DDSSRDGLSP…SPPPMDSAYA (129 aa). Polar residues-rich tracts occupy residues 172 to 182 and 206 to 216; these read PQGSTGSTPDI and AASQPGNQSDP. The span at 244-261 shows a compositional bias: basic residues; that stretch reads NRHKKPKDPKPKVKKLKY. Positions 287-322 form a coiled coil; sequence QQQQLFLQLQILSQQQQQQQQQQQQQQQQQQQQQRF. The segment at 337–378 is disordered; that stretch reads EQMARNPNPSSTPLSNTPLSPVKNSISGQTGVSSLKPGPLPP. The segment covering 342-357 has biased composition (low complexity); the sequence is NPNPSSTPLSNTPLSP. Polar residues predominate over residues 358–369; that stretch reads VKNSISGQTGVS. In terms of domain architecture, SAP spans 380-414; the sequence is LDDLKVSELRQQLRIRGLPVSGTKTALVDRLRPFQ. Residues Ser454, Ser458, Ser462, and Ser466 each carry the phosphoserine; by GSK3-beta modification. Residues 498 to 518 form a disordered region; sequence ESLLSSLNGGSGPSEPDGLDS. Residues 519-563 adopt a coiled-coil conformation; that stretch reads EKDKMLVEKQKVINQLTWKLRQEQRQVEELRMQLQKQKSSCSDQK. The segment at 579-605 is disordered; the sequence is SCPFAPQQASGKGQGHSSDSPPPACET. Over residues 585–597 the composition is skewed to polar residues; sequence QQASGKGQGHSSD. Residues Ser624, Ser628, Ser632, and Ser636 each carry the phosphoserine; by GSK3-beta modification. Positions 654–731 are disordered; the sequence is NNHYFLASSS…DAVKQQMTRS (78 aa). Polar residues predominate over residues 660 to 691; that stretch reads ASSSGAQRENHGVSSPSSSQGCAQMTGLQSSD. Residues 695–709 are compositionally biased toward low complexity; the sequence is PTFSIPSPTFSKSSS. A required for interaction with and ubiquitination by STUB1 region spans residues 714-935; that stretch reads ITQPPSYEDA…SPMDLHLQQW (222 aa). Residues Ser812, Ser859, and Ser866 each carry the phosphoserine; by MAPK1 and MAPK3 modification. At Thr893 the chain carries Phosphothreonine; by MAPK1 and MAPK3.

As to quaternary structure, homodimer. Interacts with MLLT7/FOXO4. Interacts with SRF, its association does not depend on specific DNA sequences for ternary complex formation. Interacts (via C-terminal) with EP300 (via CREB-binding domain). Interacts with HDAC4 and HDAC5. Interacts with MEF2C. Interacts (via C-terminus) with STUB1/CHIP. Interacts with PURB. Ubiquitinated; by STUB1/CHIP at the C-terminus, leading to its degradation by the proteasome. Phosphorylation by GSK3B is required for STUB1/CHIP-mediated ubiquitination. In terms of processing, phosphorylation negatively regulates transcriptional activity. Phosphorylated; by GSK3B. As to expression, expressed in smooth muscle cell-containing tissues. Expressed in the heart. Expressed in the aorta and bladder. Weakly expression in the lung, testis and kidney. Weakly expressed in the stomach. Weakly expressed in the intestine and colon. Expressed in the heart. In terms of tissue distribution, predominantly expressed in cardiac muscle. As to expression, predominantly expressed in smooth muscle cell-rich tissues.

It localises to the nucleus speckle. Functionally, smooth muscle cells (SM) and cardiac muscle cells-specific transcriptional factor which uses the canonical single or multiple CArG boxes DNA sequence. Acts as a cofactor of serum response factor (SRF) with the potential to modulate SRF-target genes. Plays a crucial role in cardiogenesis, urinary bladder development, and differentiation of the smooth muscle cell lineage (myogenesis). Positively regulates the transcription of genes involved in vascular smooth muscle contraction. Positively regulates the activation of smooth muscle cell gene promoter regions. In terms of biological role, positively regulates the activation of smooth muscle cell gene promoter regions. Activation of the MYH6 promoter is enhanced in the presence of MEF2C. This is Myocardin (Myocd) from Mus musculus (Mouse).